The primary structure comprises 358 residues: Tripartite motif-containing protein 54 (358 aa).

The RING-type zinc finger occupies 26–82 (CPICLEMFSKPVVILPCQHNLCRKCANDVFQASNPLWQSRGSTTVSSGGRFRCPSCR). Residues 121–163 (EQHLMCEEHEEEKINIYCLSCEVPTCSLCKVFGAHKDCEVAPL) form a B box-type zinc finger. Zn(2+) contacts are provided by C126, H129, C149, and H155. Positions 168–211 (KRQKSELSDGIAMLVAGNDRVQAVITQMEEVCQTIEDNSRRQKQ) are mediates microtubule-binding and homooligomerization. The stretch at 220 to 258 (LCAVLEERKGELLQALAREQEEKLQRVRGLIRQYGDHLE) forms a coiled coil. The COS domain occupies 271–329 (MEEPQMALYLQQAKELINKVGAMSKVELAGRPEPGYESMEQFTVRVEHVAEMLRTIDFQ). Positions 326–358 (IDFQPGASGEEEEVAPDGEEGSAGPEEERPDGP) are disordered. Acidic residues predominate over residues 334–345 (GEEEEVAPDGEE).

As to quaternary structure, homooligomer and heterooligomer. Interacts with tubulin. Interacts with TRIM63 and probably with TRIM55. In terms of tissue distribution, specifically expressed in heart and skeletal muscle.

It is found in the cytoplasm. It localises to the cytoskeleton. Its subcellular location is the myofibril. The protein localises to the sarcomere. The protein resides in the z line. May bind and stabilize microtubules during myotubes formation. This Homo sapiens (Human) protein is Tripartite motif-containing protein 54 (TRIM54).